A 559-amino-acid polypeptide reads, in one-letter code: Alkaline phosphatase PhoK (559 aa).

The signal sequence occupies residues 1–19 (MLKHVAAALLLATAMPVVA). The Zn(2+) site is built by D49 and T89. The Phosphothreonine intermediate role is filled by T89. An intrachain disulfide couples C90 to C126. Substrate-binding positions include N110 and 171–173 (KDR). A disulfide bond links C231 and C314. Zn(2+) is bound by residues D300, H304, D345, H346, and H491. A disulfide bridge connects residues C545 and C556.

As to quaternary structure, monomer. Zn(2+) is required as a cofactor.

It is found in the secreted. The catalysed reaction is a phosphate monoester + H2O = an alcohol + phosphate. In terms of biological role, alkaline phosphatase with broad substrate specificity. Precipitates uranium from alkaline solutions. This chain is Alkaline phosphatase PhoK, found in Sphingomonas sp.